A 1141-amino-acid chain; its full sequence is MPEPTKKEENEVPAPAPPPEEPSKEKEAGTTPAKDWTLVETPPGEEQAKQNANSQLSILFIEKPQGGTVKVGEDITFIAKVKAEDLLRKPTIKWFKGKWMDLASKAGKHLQLKETFERHSRVYTFEMQIIKAKDNFAGNYRCEVTYKDKFDSCSFDLEVHESTGTTPNIDIRSAFKRSGEGQEDAGELDFSGLLKRREVKQQEEEPQVDVWELLKNAKPSEYEKIAFQYGITDLRGMLKRLKRMRREEKKSAAFAKILDPAYQVDKGGRVRFVVELADPKLEVKWYKNGQEIRPSTKYIFEHKGCQRILFINNCQMTDDSEYYVTAGDEKCSTELFVREPPIMVTKQLEDTTAYCGERVELECEVSEDDANVKWFKNGEEIIPGPKSRYRIRVEGKKHILIIEGATKADAAEYSVMTTGGQSSAKLSVDLKPLKILTPLTDQTVNLGKEICLKCEISENIPGKWTKNGLPVQESDRLKVVHKGRIHKLVIANALTEDEGDYVFAPDAYNVTLPAKVHVIDPPKIILDGLDADNTVTVIAGNKLRLEIPISGEPPPKAMWSRGDKAIMEGSGRIRTESYPDSSTLVIDIAERDDSGVYHINLKNEAGEAHASIKVKVVDFPDPPVAPTVTEVGDDWCIMNWEPPAYDGGSPILGYFIERKKKQSSRWMRLNFDLCKETTFEPKKMIEGVAYEVRIFAVNAIGISKPSMPSRPFVPLAVTSPPTLLTVDSVTDTTVTMRWRPPDHIGAAGLDGYVLEYCFEGSTSAKQSDENGEAAYDLPAEDWIVANKDLIDKTKFTITGLPTDAKIFVRVKAVNAAGASEPKYYSQPILVKEIIEPPKIRIPRHLKQTYIRRVGEAVNLVIPFQGKPRPELTWKKDGAEIDKNQINIRNSETDTIIFIRKAERSHSGKYDLQVKVDKFVETASIDIQIIDRPGPPQIVKIEDVWGENVALTWTPPKDDGNAAITGYTIQKADKKSMEWFTVIEHYHRTSATITELVIGNEYYFRVFSENMCGLSEDATMTKESAVIARDGKIYKNPVYEDFDFSEAPMFTQPLVNTYAIAGYNATLNCSVRGNPKPKITWMKNKVAIVDDPRYRMFSNQGVCTLEIRKPSPYDGGTYCCKAVNDLGTVEIECKLEVKVIAQ.

The span at 1-10 (MPEPTKKEEN) shows a compositional bias: basic and acidic residues. Positions 1-51 (MPEPTKKEENEVPAPAPPPEEPSKEKEAGTTPAKDWTLVETPPGEEQAKQN) are disordered. 5 consecutive Ig-like C2-type domains span residues 72 to 144 (GEDI…RCEV), 251 to 340 (SAAF…VREP), 341 to 431 (PIMV…VDLK), 432 to 520 (PLKI…HVID), and 522 to 619 (PKII…VVDF). Phosphothreonine is present on Thr406. Position 611 is a phosphoserine (Ser611). Fibronectin type-III domains follow at residues 622 to 721 (PPVA…TSPP) and 722 to 833 (TLLT…VKEI). The residue at position 798 (Thr798) is a Phosphothreonine. Tyr823 is modified (phosphotyrosine). One can recognise an Ig-like C2-type 6 domain in the interval 837-931 (PKIRIPRHLK…ASIDIQIIDR (95 aa)). One can recognise a Fibronectin type-III 3 domain in the interval 934–1029 (PPQIVKIEDV…TKESAVIARD (96 aa)). An Ig-like C2-type 7 domain is found at 1047–1141 (PMFTQPLVNT…CKLEVKVIAQ (95 aa)).

It belongs to the immunoglobulin superfamily. MyBP family. In terms of assembly, interacts with USP25 (isoform USP25m only); the interaction prevents proteasomal degradation of MYBPC1.

Thick filament-associated protein located in the crossbridge region of vertebrate striated muscle a bands. Slow skeletal protein that binds to both myosin and actin. In vitro, binds to native thin filaments and modifies the activity of actin-activated myosin ATPase. May modulate muscle contraction or may play a more structural role. The sequence is that of Myosin-binding protein C, slow-type (MYBPC1) from Homo sapiens (Human).